Here is an 889-residue protein sequence, read N- to C-terminus: Chitin synthase I (889 aa).

N43 carries an N-linked (GlcNAc...) asparagine glycan. Residues 94-138 are disordered; sequence GEYFDGYNQGHPPQEHQAYDDDGQPLIEDQHGYSDNPQHQTQTPA. The span at 126 to 137 shows a compositional bias: polar residues; the sequence is YSDNPQHQTQTP. Residue N199 is glycosylated (N-linked (GlcNAc...) asparagine). 9 helical membrane passes run 431–451, 530–550, 560–580, 606–626, 641–661, 687–707, 716–736, 815–835, and 861–881; these read SAFGFISVLPGAFSAYRYVAL, RWLNGSFFAAIYAIAHFYEFF, LAFFVEFVFNTINMIFAWFAI, ILGVVFTWLYGVFLMTCFVLS, MVWFWAIIMIYLMFAAIFIAV, TLIISVMSTFGIWLIASIIMF, FIQYMLLTPTYTNVLNVYAFC, GVVLIWMITNFALAALVLSSA, and IVLWSVAVLSGFKFLGAMWFL.

It belongs to the chitin synthase family. Class I subfamily. In terms of tissue distribution, expressed in hyphal bodies.

It localises to the cell membrane. The catalysed reaction is [(1-&gt;4)-N-acetyl-beta-D-glucosaminyl](n) + UDP-N-acetyl-alpha-D-glucosamine = [(1-&gt;4)-N-acetyl-beta-D-glucosaminyl](n+1) + UDP + H(+). Polymerizes chitin, a structural polymer of the cell wall and septum, by transferring the sugar moiety of UDP-GlcNAc to the non-reducing end of the growing chitin polymer. Contributes to the production of conidia and the ability of fungal conidia to germinate. Not involved in fungal stress tolerances. This Metarhizium acridum (strain CQMa 102) protein is Chitin synthase I.